Reading from the N-terminus, the 426-residue chain is Histidine--tRNA ligase (426 aa).

The protein belongs to the class-II aminoacyl-tRNA synthetase family.

The protein localises to the cytoplasm. The catalysed reaction is tRNA(His) + L-histidine + ATP = L-histidyl-tRNA(His) + AMP + diphosphate + H(+). The polypeptide is Histidine--tRNA ligase (Saccharolobus shibatae (strain ATCC 51178 / DSM 5389 / JCM 8931 / NBRC 15437 / B12) (Sulfolobus shibatae)).